The chain runs to 183 residues: Putative calmodulin-like protein 2 (183 aa).

EF-hand domains lie at 7–42 (EQIA…LGQS), 43–78 (PTEA…KLRD), 80–115 (GAED…LGDP), and 116–151 (LSDD…KRRQ). Residues D20, D22, D24, T26, E31, D56, D58, S60, S62, E67, D93, D95, N97, E104, D129, D131, D133, Q135, and E140 each coordinate Ca(2+). Positions 154-183 (MEGHGSGGHRSSNSHKKSGCCGPNSSCTIL) are disordered. 2 S-palmitoyl cysteine lipidation sites follow: C173 and C174. Residue C180 is modified to Cysteine methyl ester. C180 is lipidated: S-farnesyl cysteine. Residues 181–183 (TIL) constitute a propeptide, removed in mature form.

This sequence belongs to the calmodulin family.

It localises to the membrane. Functionally, potential calcium sensor. In Oryza sativa subsp. japonica (Rice), this protein is Putative calmodulin-like protein 2 (CML2).